Here is a 279-residue protein sequence, read N- to C-terminus: ATP synthase gamma chain (279 aa).

This sequence belongs to the ATPase gamma chain family. In terms of assembly, F-type ATPases have 2 components, CF(1) - the catalytic core - and CF(0) - the membrane proton channel. CF(1) has five subunits: alpha(3), beta(3), gamma(1), delta(1), epsilon(1). CF(0) has three main subunits: a, b and c.

The protein resides in the cell membrane. Its function is as follows. Produces ATP from ADP in the presence of a proton gradient across the membrane. The gamma chain is believed to be important in regulating ATPase activity and the flow of protons through the CF(0) complex. The chain is ATP synthase gamma chain from Mycoplasmopsis pulmonis (strain UAB CTIP) (Mycoplasma pulmonis).